The primary structure comprises 342 residues: Trans-3-hydroxy-L-proline dehydratase (342 aa).

Serine 90 (proton acceptor) is an active-site residue. Substrate contacts are provided by residues 91–92, aspartate 252, and 257–258; these read GS and GT.

This sequence belongs to the proline racemase family.

The catalysed reaction is trans-3-hydroxy-L-proline = 1-pyrroline-2-carboxylate + H2O. The enzyme catalyses trans-4-hydroxy-L-proline = cis-4-hydroxy-D-proline. Functionally, catalyzes the dehydration of trans-3-hydroxy-L-proline (t3LHyp) to Delta(1)-pyrroline-2-carboxylate (Pyr2C). Can also catalyze the epimerization of trans-4-hydroxy-L-proline (t4LHyp) to cis-4-hydroxy-D-proline (c4DHyp), albeit with 30-fold lower efficiency. Is likely involved in both degradation pathways that convert t3LHyp to L-proline and t4LHyp to alpha-ketoglutarate, which would allow A.tumefaciens to grow on t3LHyp or t4LHyp as a sole carbon source. Displays no proline racemase activity. This is Trans-3-hydroxy-L-proline dehydratase from Agrobacterium fabrum (strain C58 / ATCC 33970) (Agrobacterium tumefaciens (strain C58)).